Here is a 517-residue protein sequence, read N- to C-terminus: Ribose import ATP-binding protein RbsA 1 (517 aa).

2 ABC transporter domains span residues leucine 11 to aspartate 251 and tyrosine 263 to threonine 507. Residue glycine 43 to serine 50 participates in ATP binding.

Belongs to the ABC transporter superfamily. Ribose importer (TC 3.A.1.2.1) family. The complex is composed of an ATP-binding protein (RbsA), two transmembrane proteins (RbsC) and a solute-binding protein (RbsB).

The protein localises to the cell inner membrane. It carries out the reaction D-ribose(out) + ATP + H2O = D-ribose(in) + ADP + phosphate + H(+). Functionally, part of the ABC transporter complex RbsABC involved in ribose import. Responsible for energy coupling to the transport system. This chain is Ribose import ATP-binding protein RbsA 1, found in Burkholderia ambifaria (strain ATCC BAA-244 / DSM 16087 / CCUG 44356 / LMG 19182 / AMMD) (Burkholderia cepacia (strain AMMD)).